Reading from the N-terminus, the 90-residue chain is Acylphosphatase (90 aa).

Residues 3 to 90 form the Acylphosphatase-like domain; sequence AIEVDVFGLV…FETNDFAIRG (88 aa). Active-site residues include arginine 18 and asparagine 36.

The protein belongs to the acylphosphatase family.

The catalysed reaction is an acyl phosphate + H2O = a carboxylate + phosphate + H(+). This is Acylphosphatase (acyP) from Leuconostoc mesenteroides subsp. mesenteroides (strain ATCC 8293 / DSM 20343 / BCRC 11652 / CCM 1803 / JCM 6124 / NCDO 523 / NBRC 100496 / NCIMB 8023 / NCTC 12954 / NRRL B-1118 / 37Y).